The following is a 330-amino-acid chain: Putative 4-hydroxythreonine-4-phosphate dehydrogenase (330 aa).

A divalent metal cation contacts are provided by His-169, His-213, and His-263.

It belongs to the PdxA family. Homodimer. Requires Zn(2+) as cofactor. Mg(2+) is required as a cofactor. Co(2+) serves as cofactor.

The protein localises to the cytoplasm. It carries out the reaction 4-(phosphooxy)-L-threonine + NAD(+) = 3-amino-2-oxopropyl phosphate + CO2 + NADH. It functions in the pathway cofactor biosynthesis; pyridoxine 5'-phosphate biosynthesis; pyridoxine 5'-phosphate from D-erythrose 4-phosphate: step 4/5. Catalyzes the NAD(P)-dependent oxidation of 4-(phosphooxy)-L-threonine (HTP) into 2-amino-3-oxo-4-(phosphooxy)butyric acid which spontaneously decarboxylates to form 3-amino-2-oxopropyl phosphate (AHAP). The sequence is that of Putative 4-hydroxythreonine-4-phosphate dehydrogenase from Novosphingobium aromaticivorans (Sphingomonas aromaticivorans).